A 485-amino-acid polypeptide reads, in one-letter code: Glutamate--tRNA ligase (485 aa).

Residue Arg6 participates in L-glutamate binding. The 'HIGH' region motif lies at 9–19 (PSPTGNLHIGT). L-glutamate contacts are provided by residues Tyr192 and 210–214 (RGEDH). Residues 248-252 (KLSKR) carry the 'KMSKS' region motif. Lys251 provides a ligand contact to ATP.

This sequence belongs to the class-I aminoacyl-tRNA synthetase family. Glutamate--tRNA ligase type 1 subfamily. As to quaternary structure, monomer. Does not require zinc. is required as a cofactor.

It is found in the cytoplasm. The enzyme catalyses tRNA(Glu) + L-glutamate + ATP = L-glutamyl-tRNA(Glu) + AMP + diphosphate. In terms of biological role, non-discriminating glutamyl-tRNA synthetase. Catalyzes the attachment of glutamate to tRNA(Glu) in a two-step reaction: glutamate is first activated by ATP to form Glu-AMP and then transferred to the acceptor end of tRNA(Glu). Acylates both tRNA(Glu) and tRNA(Gln) with glutamate, but has 13-fold higher efficiency with tRNA(Glu). The polypeptide is Glutamate--tRNA ligase (gltX) (Thermosynechococcus vestitus (strain NIES-2133 / IAM M-273 / BP-1)).